A 111-amino-acid chain; its full sequence is MLNLGQVKVLEEKVAKAVHLVQMLKEENAALRAEIDGRGKRITELEQLVLXFQDDQTKIEEGILKALNHLSTFEDSAYGEALTQHAAKVLENREHAGLSEELTSRTQMEIF.

Positions 4 to 51 form a coiled coil; that stretch reads LGQVKVLEEKVAKAVHLVQMLKEENAALRAEIDGRGKRITELEQLVLX.

This is an uncharacterized protein from Treponema pallidum (strain Nichols).